A 258-amino-acid polypeptide reads, in one-letter code: MLFLLSPAKSLDYATPAHVAAHTQPLFKRQSAELIAVLKAKSPQEISSLMKLSDALAGLNVARYEAWSPAFTAHNSKQAVLAFNGDVYAGLDAKTLGEAQLAWAQDHLCILSGLYGVLRPLDWMQPYRLEMGTALVTGRGKNLYQFWGAQIADYLNERAATDVSPVIVNLASEEYFKSVSRKVLKARVVTCVFEEWRGDKYKIISFMAKRARGLMVRYAIENRLATVEKLKGFEAEGYCFDASASAVDRLVFRRGQGA.

The protein belongs to the UPF0246 family.

The protein is UPF0246 protein Pnap_3166 of Polaromonas naphthalenivorans (strain CJ2).